A 427-amino-acid chain; its full sequence is Enolase (427 aa).

Gln-163 is a (2R)-2-phosphoglycerate binding site. Residue Glu-205 is the Proton donor of the active site. Mg(2+) is bound by residues Asp-242, Glu-285, and Asp-312. The (2R)-2-phosphoglycerate site is built by Lys-337, Arg-366, Ser-367, and Lys-388. Catalysis depends on Lys-337, which acts as the Proton acceptor.

Belongs to the enolase family. Mg(2+) is required as a cofactor.

The protein localises to the cytoplasm. The protein resides in the secreted. It localises to the cell surface. The catalysed reaction is (2R)-2-phosphoglycerate = phosphoenolpyruvate + H2O. Its pathway is carbohydrate degradation; glycolysis; pyruvate from D-glyceraldehyde 3-phosphate: step 4/5. Its function is as follows. Catalyzes the reversible conversion of 2-phosphoglycerate (2-PG) into phosphoenolpyruvate (PEP). It is essential for the degradation of carbohydrates via glycolysis. The sequence is that of Enolase from Burkholderia thailandensis (strain ATCC 700388 / DSM 13276 / CCUG 48851 / CIP 106301 / E264).